A 1276-amino-acid chain; its full sequence is Sterol regulatory element-binding protein cleavage-activating protein (1276 aa).

Residues 1-18 (MTLTERLREKISQAFYNH) lie on the Cytoplasmic side of the membrane. Residues 19–39 (GLLCASYPIPIILFTGLCILA) traverse the membrane as a helical segment. The Lumenal segment spans residues 40–279 (CCYPLLKLPL…NLVHVHFKEE (240 aa)). Residues 46-284 (KLPLPGTGPV…HFKEEIGIAE (239 aa)) are loop-1. A disordered region spans residues 60-81 (PVKDYSPPPVDSDHKQGEPSEQ). Asparagine 263 carries an N-linked (GlcNAc...) asparagine glycan. A helical transmembrane segment spans residues 280 to 300 (IGIAELIPLVTTYIILFAYIY). The SSD domain maps to 284 to 442 (ELIPLVTTYI…MFFFTTVLSI (159 aa)). Topologically, residues 301–312 (FSTRKIDMVKSK) are cytoplasmic. Residues 313–333 (WGLALAAVVTVLSSLLMSVGL) form a helical membrane-spanning segment. Residues 334–344 (CTLFGLTPTLN) lie on the Lumenal side of the membrane. The helical transmembrane segment at 345 to 365 (GGEIFPYLVVVIGLENVLVLT) threads the bilayer. Over 366–401 (KSVVSTPVDLEVKLRIAQGLSSESWSIMKNVATELG) the chain is Cytoplasmic. A helical membrane pass occupies residues 402-422 (IILIGYFTLVPAIQEFCLFAV). Valine 423 is a topological domain (lumenal). A helical transmembrane segment spans residues 424 to 444 (GLVSDFFLQMFFFTTVLSIDI). The Cytoplasmic portion of the chain corresponds to 445–518 (RRMELADLNK…FLARTRLAQR (74 aa)). The ER export signal motif lies at 447-452 (MELADL). Residues lysine 454 and lysine 466 each participate in a glycyl lysine isopeptide (Lys-Gly) (interchain with G-Cter in ubiquitin) cross-link. Residues 519–539 (LIMAGTVVWIGILVYTDPAGL) traverse the membrane as a helical segment. The interval 535-710 (DPAGLRTYLA…QAHGDITLYK (176 aa)) is loop-7. Topologically, residues 540–708 (RTYLAAQVTE…GTQAHGDITL (169 aa)) are lumenal. Asparagine 590 and asparagine 641 each carry an N-linked (GlcNAc...) asparagine glycan. The helical transmembrane segment at 709 to 729 (YKVAALGLAAGIVLVLLLLCL) threads the bilayer. The Cytoplasmic segment spans residues 730 to 1276 (YRVLCPRNYG…YVPSVLEKLD (547 aa)). Residues 731 to 1276 (RVLCPRNYGQ…YVPSVLEKLD (546 aa)) are interaction with SREBF2. One copy of the WD 1 repeat lies at 771 to 811 (VLRGHLMDIECLASDGMLLVSCCLAGQVCVWDAQTGDCLTR). Positions 816-903 (GSRRDSCGGG…RHRAGCGRAR (88 aa)) are disordered. Phosphoserine occurs at positions 821, 837, 843, 850, 905, and 934. Residues 928 to 957 (PALRPPSPGSPLPQASQEDGAAPEKGSPPL) form a disordered region. 2 WD repeats span residues 949-999 (APEK…LCCS) and 1002-1039 (EVSS…SLSP). At arginine 1048 the chain carries Omega-N-methylarginine. WD repeat units lie at residues 1074 to 1111 (AHQK…CLFT), 1114 to 1152 (GHSG…RVSH), 1155 to 1192 (AHRG…KLYS), and 1194 to 1232 (QQDL…LLQT).

The protein belongs to the WD repeat SCAP family. As to quaternary structure, membrane region forms a homotetramer. Component of the SCAP-SREBP complex (composed of SCAP and SREBF1/SREBP1 or SREBF2/SREBP2); interacts with SREBF1/SREBP1 or SREBF2/SREBP2 through its C-terminal cytoplasmic domain. Forms a ternary complex with INSIG1 or INSIG2 through its transmembrane domains at high sterol concentrations. Interacts with PAQR3; the interaction anchors the SCAP-SREBP complex to the Golgi apparatus in low cholesterol conditions. Interacts with the SEC23-SEC24 complex in a SAR1-GTP-dependent manner through an ER export signal in its third cytoplasmic loop. Interacts with RNF139; the interaction inhibits the interaction of SCAP with SEC24B and hampering the ER to Golgi transport of the SCAP-SREBP complex. Interacts with SPRING. Post-translationally, ubiquitinated at Lys-454 and Lys-466. RNF145 triggers ubiquitination of SCAP, likely inhibiting SCAP-SREBP complex transport to the Golgi apparatus and the subsequent processing/maturation of SREBF2/SREBP2.

The protein resides in the endoplasmic reticulum membrane. It is found in the golgi apparatus membrane. It localises to the cytoplasmic vesicle. The protein localises to the COPII-coated vesicle membrane. In terms of biological role, escort protein required for cholesterol as well as lipid homeostasis. Regulates export of the SCAP-SREBP complex from the endoplasmic reticulum to the Golgi upon low cholesterol, thereby regulating the processing of sterol regulatory element-binding proteins (SREBPs) SREBF1/SREBP1 and SREBF2/SREBP2. At high sterol concentrations, formation of a ternary complex with INSIG (INSIG1 or INSIG2) leads to mask the ER export signal in SCAP, promoting retention of the complex in the endoplasmic reticulum. Low sterol concentrations trigger release of INSIG, a conformational change in the SSD domain of SCAP, unmasking of the ER export signal, promoting recruitment into COPII-coated vesicles and transport of the SCAP-SREBP to the Golgi: in the Golgi, SREBPs are then processed, releasing the transcription factor fragment of SREBPs from the membrane, its import into the nucleus and up-regulation of LDLR, INSIG1 and the mevalonate pathway. Binds cholesterol via its SSD domain. This is Sterol regulatory element-binding protein cleavage-activating protein from Cricetulus griseus (Chinese hamster).